We begin with the raw amino-acid sequence, 488 residues long: Glutamate synthase [NADPH] small chain (488 aa).

Positions 38-69 (ESLRQQATRCMDCGIPFCHNGCPLGNLIPEWN) constitute a 4Fe-4S ferredoxin-type domain.

Requires [4Fe-4S] cluster as cofactor.

It catalyses the reaction 2 L-glutamate + NADP(+) = L-glutamine + 2-oxoglutarate + NADPH + H(+). Its pathway is amino-acid biosynthesis; L-glutamate biosynthesis via GLT pathway; L-glutamate from 2-oxoglutarate and L-glutamine (NADP(+) route): step 1/1. The protein is Glutamate synthase [NADPH] small chain (gltD) of Mycobacterium tuberculosis (strain CDC 1551 / Oshkosh).